The following is a 1035-amino-acid chain: Probable LRR receptor-like serine/threonine-protein kinase At1g53440 (1035 aa).

Residues Met1–Ala26 form the signal peptide. Over Gln27–Gly607 the chain is Extracellular. N-linked (GlcNAc...) asparagine glycans are attached at residues Asn46, Asn75, Asn83, and Asn110. LRR repeat units lie at residues Val87–Asn110, Leu111–Ile135, Leu137–Ile158, Thr160–Leu182, Arg183–Leu206, Asn208–Arg232, and Val234–Leu254. N-linked (GlcNAc...) asparagine glycans are attached at residues Asn194, Asn208, and Asn229. Asn256 and Asn277 each carry an N-linked (GlcNAc...) asparagine glycan. LRR repeat units lie at residues Met278–Ser302, Met303–Ser326, Asn328–Leu349, and Asp350–Gln372. Residues Asn317, Asn337, Asn361, Asn386, Asn469, and Asn559 are each glycosylated (N-linked (GlcNAc...) asparagine). A helical membrane pass occupies residues Val608–Leu628. The Cytoplasmic segment spans residues Arg629–Glu1035. Phosphothreonine is present on Thr656. The Protein kinase domain maps to Phe667–Leu948. ATP-binding positions include Ile673–Val681 and Lys695. At Tyr740 the chain carries Phosphotyrosine. Catalysis depends on Asp793, which acts as the Proton acceptor. Position 826 is a phosphoserine (Ser826). A phosphothreonine mark is found at Thr827 and Thr832. Residue Tyr840 is modified to Phosphotyrosine. The interval Leu969–Glu1035 is disordered. Residues Asp972–Thr981 show a composition bias toward polar residues. Residues Ser1009–Arg1023 show a composition bias toward low complexity.

Belongs to the protein kinase superfamily. Ser/Thr protein kinase family.

Its subcellular location is the cell membrane. The enzyme catalyses L-seryl-[protein] + ATP = O-phospho-L-seryl-[protein] + ADP + H(+). It carries out the reaction L-threonyl-[protein] + ATP = O-phospho-L-threonyl-[protein] + ADP + H(+). This chain is Probable LRR receptor-like serine/threonine-protein kinase At1g53440, found in Arabidopsis thaliana (Mouse-ear cress).